Reading from the N-terminus, the 397-residue chain is Elongation factor Tu (397 aa).

Residues 10–207 enclose the tr-type G domain; it reads LPHVNVGTIG…TLDSYIPEPV (198 aa). The tract at residues 19-26 is G1; sequence GHVDHGKT. 19 to 26 is a binding site for GTP; that stretch reads GHVDHGKT. Residue T26 participates in Mg(2+) binding. Residues 60–64 form a G2 region; sequence GITIN. Residues 81–84 are G3; sequence DCPG. Residues 81 to 85 and 136 to 139 each bind GTP; these read DCPGH and NKAD. A G4 region spans residues 136-139; that stretch reads NKAD. Residues 174-176 form a G5 region; the sequence is SAR.

The protein belongs to the TRAFAC class translation factor GTPase superfamily. Classic translation factor GTPase family. EF-Tu/EF-1A subfamily. As to quaternary structure, monomer.

The protein localises to the cytoplasm. It carries out the reaction GTP + H2O = GDP + phosphate + H(+). GTP hydrolase that promotes the GTP-dependent binding of aminoacyl-tRNA to the A-site of ribosomes during protein biosynthesis. The sequence is that of Elongation factor Tu from Pseudomonas syringae pv. syringae (strain B728a).